The primary structure comprises 304 residues: MSNVLELKIPASTANLGVGFDSIGMALDKFLHLSVKETSGTKWEYIFHDDASKQLPTDETNFIYHVAQQVAAKYSVDLPNLCIEMRSDIPLARGLGSSASALVGAIYIANYFGDIQLSKHEVLQLATEIEGHPDNVAPTIYGGLISGYYNDVSKETSVAHIDIPDVDVIVTIPTYELKTEASRRALPQKLTHSEAVKSSAISNTMICALAQHNYELAGKLMQQDGFHEPYRQHLIAEFDEVKTIASQHNAYATVISGAGPTILIFSRKENSGELVRALNRNVVTCHSELVDINVSGVKERIVYQ.

An ATP-binding site is contributed by 90–100 (PLARGLGSSAS).

It belongs to the GHMP kinase family. Homoserine kinase subfamily.

It is found in the cytoplasm. It carries out the reaction L-homoserine + ATP = O-phospho-L-homoserine + ADP + H(+). The protein operates within amino-acid biosynthesis; L-threonine biosynthesis; L-threonine from L-aspartate: step 4/5. Catalyzes the ATP-dependent phosphorylation of L-homoserine to L-homoserine phosphate. The protein is Homoserine kinase of Staphylococcus aureus (strain bovine RF122 / ET3-1).